The sequence spans 154 residues: Transcriptional repressor NrdR (154 aa).

Residues 3–34 (CPYCRHPDSRVVDSREADDGQLIRRRRSCPEC) fold into a zinc finger. Positions 46 to 136 (LAVVKRSGVT…VYRSFESLAD (91 aa)) constitute an ATP-cone domain.

Belongs to the NrdR family. Requires Zn(2+) as cofactor.

Its function is as follows. Negatively regulates transcription of bacterial ribonucleotide reductase nrd genes and operons by binding to NrdR-boxes. This is Transcriptional repressor NrdR from Salinispora arenicola (strain CNS-205).